The primary structure comprises 575 residues: Isocitrate dehydrogenase kinase/phosphatase (575 aa).

Residues 315–321 (APGIRGM) and lysine 336 contribute to the ATP site. Aspartate 371 is a catalytic residue.

The protein belongs to the AceK family.

The protein localises to the cytoplasm. The enzyme catalyses L-seryl-[isocitrate dehydrogenase] + ATP = O-phospho-L-seryl-[isocitrate dehydrogenase] + ADP + H(+). Bifunctional enzyme which can phosphorylate or dephosphorylate isocitrate dehydrogenase (IDH) on a specific serine residue. This is a regulatory mechanism which enables bacteria to bypass the Krebs cycle via the glyoxylate shunt in response to the source of carbon. When bacteria are grown on glucose, IDH is fully active and unphosphorylated, but when grown on acetate or ethanol, the activity of IDH declines drastically concomitant with its phosphorylation. In Citrobacter koseri (strain ATCC BAA-895 / CDC 4225-83 / SGSC4696), this protein is Isocitrate dehydrogenase kinase/phosphatase.